The chain runs to 387 residues: MFIDLTPEQRQLQAEIRQYFSNLISPDERTEMEKDRHGPAYRAVIRRMGRDGRLGVGWPKEFGGLGFGPIEQQIFVNEAHRADVPLPAVTLQTVGPTLQAHGSELQKKKFLPAILAGEAHFAIGYTEPEAGTDLASLRTTAVRDGDHYIVNGQKVFTTGAHDADYIWLACRTDPNAAKHKGISILIVDTKDPGYSWTPIILADGAHHTNATYYNDVRVPVDMLVGKENDGWRLITTQLNNERVMLGPAGRFASIYDRVHAWASVPGGNGVTPIDHDDVKRALGEIRAIWRINELLNWQVASAGEDINMADAAATKVFGTERVQRAGRLAEEIVGKYGNPAEPDTAELLRWLDAQTKRNLVITFGGGVNEVMREMIAASGLKVPRVPR.

Residues isoleucine 123–threonine 126, threonine 132, and threonine 158 contribute to the FAD site. Glutamate 241 acts as the Proton acceptor in catalysis. Residue valine 367 to glutamate 369 coordinates FAD.

The protein belongs to the acyl-CoA dehydrogenase family. As to quaternary structure, heterotetramer composed of FadE28 and FadE29. It depends on FAD as a cofactor.

The enzyme catalyses 3-oxochol-4-en-22-oyl-CoA + A = 3-oxochola-4,17-dien-22-oyl-CoA + AH2. The protein operates within steroid metabolism; cholesterol degradation. Functionally, involved in the third cycle of side chain dehydrogenation in the beta-oxidation of cholesterol catabolism. Contributes partly to the virulence by increasing the efficiency of beta-oxidation. Catalyzes the dehydrogenation of 2'-propanoyl-CoA ester side chains of 3-oxo-4-pregnene-20-carboxyl-CoA (3-OPC-CoA) to yield 3-oxo-4,17-pregnadiene-20-carboxyl-CoA (3-OPDC-CoA). Also able to dehydrogenate steroyl-CoA such as 3-oxo-chol-4-en-24-oyl-CoA (3-OCO-CoA), 1beta-(2'-propanoyl-CoA)-3a-alpha-H- 7a-beta-methylhexahydro-4-indanone (indanone-CoA ester), hexahydroindanone and pregenenone. The chain is Acyl-CoA dehydrogenase FadE29 (fadE29) from Mycobacterium tuberculosis (strain ATCC 25618 / H37Rv).